We begin with the raw amino-acid sequence, 384 residues long: Dual-specificity RNA methyltransferase RlmN (384 aa).

Catalysis depends on glutamate 93, which acts as the Proton acceptor. The 241-residue stretch at 99-339 (EETRGTLCVS…TTIRKTRGDD (241 aa)) folds into the Radical SAM core domain. Residues cysteine 106 and cysteine 344 are joined by a disulfide bond. Cysteine 113, cysteine 117, and cysteine 120 together coordinate [4Fe-4S] cluster. S-adenosyl-L-methionine-binding positions include 170 to 171 (GE), serine 202, 224 to 226 (SLH), and asparagine 301. Residue cysteine 344 is the S-methylcysteine intermediate of the active site.

The protein belongs to the radical SAM superfamily. RlmN family. The cofactor is [4Fe-4S] cluster.

The protein resides in the cytoplasm. The catalysed reaction is adenosine(2503) in 23S rRNA + 2 reduced [2Fe-2S]-[ferredoxin] + 2 S-adenosyl-L-methionine = 2-methyladenosine(2503) in 23S rRNA + 5'-deoxyadenosine + L-methionine + 2 oxidized [2Fe-2S]-[ferredoxin] + S-adenosyl-L-homocysteine. It carries out the reaction adenosine(37) in tRNA + 2 reduced [2Fe-2S]-[ferredoxin] + 2 S-adenosyl-L-methionine = 2-methyladenosine(37) in tRNA + 5'-deoxyadenosine + L-methionine + 2 oxidized [2Fe-2S]-[ferredoxin] + S-adenosyl-L-homocysteine. Its function is as follows. Specifically methylates position 2 of adenine 2503 in 23S rRNA and position 2 of adenine 37 in tRNAs. m2A2503 modification seems to play a crucial role in the proofreading step occurring at the peptidyl transferase center and thus would serve to optimize ribosomal fidelity. The chain is Dual-specificity RNA methyltransferase RlmN from Cupriavidus necator (strain ATCC 17699 / DSM 428 / KCTC 22496 / NCIMB 10442 / H16 / Stanier 337) (Ralstonia eutropha).